The primary structure comprises 208 residues: Uracil phosphoribosyltransferase (208 aa).

Residues Arg-78, Arg-103, and 130-138 (DPMLATGGS) each bind 5-phospho-alpha-D-ribose 1-diphosphate. Uracil contacts are provided by residues Ile-193 and 198 to 200 (GDA). 5-phospho-alpha-D-ribose 1-diphosphate is bound at residue Asp-199.

Belongs to the UPRTase family. The cofactor is Mg(2+).

It catalyses the reaction UMP + diphosphate = 5-phospho-alpha-D-ribose 1-diphosphate + uracil. Its pathway is pyrimidine metabolism; UMP biosynthesis via salvage pathway; UMP from uracil: step 1/1. Allosterically activated by GTP. Functionally, catalyzes the conversion of uracil and 5-phospho-alpha-D-ribose 1-diphosphate (PRPP) to UMP and diphosphate. This Shewanella piezotolerans (strain WP3 / JCM 13877) protein is Uracil phosphoribosyltransferase.